A 105-amino-acid polypeptide reads, in one-letter code: Large ribosomal subunit protein eL36 (105 aa).

It belongs to the eukaryotic ribosomal protein eL36 family. As to quaternary structure, component of the large ribosomal subunit.

Its subcellular location is the cytoplasm. It is found in the cytosol. In terms of biological role, component of the large ribosomal subunit. The ribosome is a large ribonucleoprotein complex responsible for the synthesis of proteins in the cell. The polypeptide is Large ribosomal subunit protein eL36 (RPL36) (Hydrophis hardwickii (Hardwick's spine-bellied seasnake)).